The following is a 249-amino-acid chain: NADH-quinone oxidoreductase subunit C (249 aa).

Belongs to the complex I 30 kDa subunit family. As to quaternary structure, NDH-1 is composed of 14 different subunits. Subunits NuoB, C, D, E, F, and G constitute the peripheral sector of the complex.

Its subcellular location is the cell inner membrane. It carries out the reaction a quinone + NADH + 5 H(+)(in) = a quinol + NAD(+) + 4 H(+)(out). In terms of biological role, NDH-1 shuttles electrons from NADH, via FMN and iron-sulfur (Fe-S) centers, to quinones in the respiratory chain. The immediate electron acceptor for the enzyme in this species is believed to be ubiquinone. Couples the redox reaction to proton translocation (for every two electrons transferred, four hydrogen ions are translocated across the cytoplasmic membrane), and thus conserves the redox energy in a proton gradient. This chain is NADH-quinone oxidoreductase subunit C, found in Stenotrophomonas maltophilia (strain R551-3).